We begin with the raw amino-acid sequence, 338 residues long: Ribosomal RNA small subunit methyltransferase C (338 aa).

Belongs to the methyltransferase superfamily. RsmC family. In terms of assembly, monomer.

Its subcellular location is the cytoplasm. The enzyme catalyses guanosine(1207) in 16S rRNA + S-adenosyl-L-methionine = N(2)-methylguanosine(1207) in 16S rRNA + S-adenosyl-L-homocysteine + H(+). Functionally, specifically methylates the guanine in position 1207 of 16S rRNA in the 30S particle. This Acinetobacter baylyi (strain ATCC 33305 / BD413 / ADP1) protein is Ribosomal RNA small subunit methyltransferase C.